The following is an 89-amino-acid chain: Small ribosomal subunit protein uS15 (89 aa).

The protein belongs to the universal ribosomal protein uS15 family. In terms of assembly, part of the 30S ribosomal subunit. Forms a bridge to the 50S subunit in the 70S ribosome, contacting the 23S rRNA.

One of the primary rRNA binding proteins, it binds directly to 16S rRNA where it helps nucleate assembly of the platform of the 30S subunit by binding and bridging several RNA helices of the 16S rRNA. Its function is as follows. Forms an intersubunit bridge (bridge B4) with the 23S rRNA of the 50S subunit in the ribosome. The sequence is that of Small ribosomal subunit protein uS15 from Desulfosudis oleivorans (strain DSM 6200 / JCM 39069 / Hxd3) (Desulfococcus oleovorans).